Reading from the N-terminus, the 862-residue chain is Bifunctional uridylyltransferase/uridylyl-removing enzyme (862 aa).

Residues 1 to 328 (MSTAAIPTDA…FPRRAGAAIV (328 aa)) are uridylyltransferase. The tract at residues 329–685 (INERFQAVRE…ARVSDADQGV (357 aa)) is uridylyl-removing. The HD domain occupies 447 to 563 (VDQHIMMVLR…GRFADTVGTE (117 aa)). ACT domains follow at residues 686–765 (QVMV…DRPS) and 794–862 (ILSL…RLHI).

This sequence belongs to the GlnD family. Mg(2+) is required as a cofactor.

The catalysed reaction is [protein-PII]-L-tyrosine + UTP = [protein-PII]-uridylyl-L-tyrosine + diphosphate. The enzyme catalyses [protein-PII]-uridylyl-L-tyrosine + H2O = [protein-PII]-L-tyrosine + UMP + H(+). Its activity is regulated as follows. Uridylyltransferase (UTase) activity is inhibited by glutamine, while glutamine activates uridylyl-removing (UR) activity. Modifies, by uridylylation and deuridylylation, the PII regulatory proteins (GlnB and homologs), in response to the nitrogen status of the cell that GlnD senses through the glutamine level. Under low glutamine levels, catalyzes the conversion of the PII proteins and UTP to PII-UMP and PPi, while under higher glutamine levels, GlnD hydrolyzes PII-UMP to PII and UMP (deuridylylation). Thus, controls uridylylation state and activity of the PII proteins, and plays an important role in the regulation of nitrogen assimilation and metabolism. This Aromatoleum aromaticum (strain DSM 19018 / LMG 30748 / EbN1) (Azoarcus sp. (strain EbN1)) protein is Bifunctional uridylyltransferase/uridylyl-removing enzyme.